A 205-amino-acid chain; its full sequence is Small ribosomal subunit protein uS4 (205 aa).

Residues 94 to 157 (SRLDAVVYRA…RNLALVLEAL (64 aa)) enclose the S4 RNA-binding domain.

Belongs to the universal ribosomal protein uS4 family. As to quaternary structure, part of the 30S ribosomal subunit. Contacts protein S5. The interaction surface between S4 and S5 is involved in control of translational fidelity.

In terms of biological role, one of the primary rRNA binding proteins, it binds directly to 16S rRNA where it nucleates assembly of the body of the 30S subunit. Its function is as follows. With S5 and S12 plays an important role in translational accuracy. The protein is Small ribosomal subunit protein uS4 of Hyphomonas neptunium (strain ATCC 15444).